We begin with the raw amino-acid sequence, 588 residues long: Sulfite reductase [NADPH] hemoprotein beta-component (588 aa).

4 residues coordinate [4Fe-4S] cluster: Cys442, Cys448, Cys487, and Cys491. Cys491 is a binding site for siroheme.

The protein belongs to the nitrite and sulfite reductase 4Fe-4S domain family. In terms of assembly, alpha(8)-beta(8). The alpha component is a flavoprotein, the beta component is a hemoprotein. Siroheme serves as cofactor. Requires [4Fe-4S] cluster as cofactor.

It catalyses the reaction hydrogen sulfide + 3 NADP(+) + 3 H2O = sulfite + 3 NADPH + 4 H(+). It functions in the pathway sulfur metabolism; hydrogen sulfide biosynthesis; hydrogen sulfide from sulfite (NADPH route): step 1/1. Its function is as follows. Component of the sulfite reductase complex that catalyzes the 6-electron reduction of sulfite to sulfide. This is one of several activities required for the biosynthesis of L-cysteine from sulfate. The polypeptide is Sulfite reductase [NADPH] hemoprotein beta-component (Actinobacillus pleuropneumoniae serotype 7 (strain AP76)).